Here is a 222-residue protein sequence, read N- to C-terminus: Sperm acrosome-associated protein 9 (222 aa).

Residues 164-222 (QHVSEPQAHQESTRGAARPAQAIGTQPRATKHKCRQLTKASLKPRGCSKPPWRPPGGKL) form a disordered region.

Microtubule inner protein component of sperm flagellar doublet microtubules. Interacts with CABP1 and CALR. Interacts with INCA1. Interacts with microtubules.

The protein localises to the cytoplasm. It localises to the cytoplasmic vesicle. It is found in the secretory vesicle. The protein resides in the acrosome. Its subcellular location is the cytoskeleton. The protein localises to the cilium basal body. It localises to the flagellum axoneme. It is found in the cilium axoneme. The protein resides in the nucleus. In terms of biological role, microtubule inner protein (MIP) part of the dynein-decorated doublet microtubules (DMTs) of multiciliated respiratory cells and the distal singlet microtubules of monoflagellated spermatozoa. Forms an extensive interaction network cross-linking the lumen of axonemal doublet microtubules. This chain is Sperm acrosome-associated protein 9, found in Homo sapiens (Human).